A 504-amino-acid chain; its full sequence is GTPase Der (504 aa).

An EngA-type G 1 domain is found at Pro-4–Met-168. GTP contacts are provided by residues Gly-10–Ser-17, Asp-57–Ile-61, and Asn-120–Asp-123. Basic and acidic residues predominate over residues Met-168–Glu-179. A disordered region spans residues Met-168 to Phe-191. The segment covering Glu-180–Phe-191 has biased composition (acidic residues). The region spanning Ile-216–Thr-389 is the EngA-type G 2 domain. GTP-binding positions include Gly-222–Ser-229, Asp-269–Val-273, and Asn-334–Asp-337. Positions Gln-390–Ser-474 constitute a KH-like domain.

It belongs to the TRAFAC class TrmE-Era-EngA-EngB-Septin-like GTPase superfamily. EngA (Der) GTPase family. As to quaternary structure, associates with the 50S ribosomal subunit.

Its function is as follows. GTPase that plays an essential role in the late steps of ribosome biogenesis. In Haemophilus influenzae (strain ATCC 51907 / DSM 11121 / KW20 / Rd), this protein is GTPase Der.